We begin with the raw amino-acid sequence, 377 residues long: MNHSDTLSLSLELLEQPSVTPIDHTCQTIMADRLAKVGFHIEPMRFGDVDNLWARRGTEGPVFCFAGHTDVVPTGRLDAWNSDPFAPEIRDGKLYGRGSADMKTALAAMVVASERFVAKHPNHKGSIAFLITSDEEGPAVNGTVKVIETLEKRNEKITWCLVGEPSSTHKLGDIVKNGRRGSLNAVLKVQGKQGHVAYPHLARNPIHEASPALAELCQTVWDNGNEYFPATSFQISNIHAGTGATNVIPGALEVTFNFRYSTEVTAEQLKQRVHEILDKHGLQYEIVWNLSGLPFLTPVGELVNAAQTAILNVTGTETELSTSGGTSDGRFIAPTGAQVLELGVLNATIHQINEHVDVHDLDPLTDIYEQILENLLA.

Residue His68 participates in Zn(2+) binding. Asp70 is a catalytic residue. Asp101 contributes to the Zn(2+) binding site. The active-site Proton acceptor is the Glu135. 3 residues coordinate Zn(2+): Glu136, Glu164, and His350.

It belongs to the peptidase M20A family. DapE subfamily. As to quaternary structure, homodimer. Requires Zn(2+) as cofactor. Co(2+) serves as cofactor.

The enzyme catalyses N-succinyl-(2S,6S)-2,6-diaminopimelate + H2O = (2S,6S)-2,6-diaminopimelate + succinate. It functions in the pathway amino-acid biosynthesis; L-lysine biosynthesis via DAP pathway; LL-2,6-diaminopimelate from (S)-tetrahydrodipicolinate (succinylase route): step 3/3. In terms of biological role, catalyzes the hydrolysis of N-succinyl-L,L-diaminopimelic acid (SDAP), forming succinate and LL-2,6-diaminopimelate (DAP), an intermediate involved in the bacterial biosynthesis of lysine and meso-diaminopimelic acid, an essential component of bacterial cell walls. The protein is Succinyl-diaminopimelate desuccinylase of Acinetobacter baumannii (strain AB0057).